The sequence spans 844 residues: Elongation factor 2 (844 aa).

Positions 17 to 255 (TNVRNMSVIA…LWGDNYFNPK (239 aa)) constitute a tr-type G domain. 26–33 (AHVDHGKS) is a binding site for GTP. Threonine 57 and threonine 59 each carry phosphothreonine. GTP is bound by residues 160 to 163 (NKVD) and 215 to 217 (SGL). A Diphthamide modification is found at histidine 700.

It belongs to the TRAFAC class translation factor GTPase superfamily. Classic translation factor GTPase family. EF-G/EF-2 subfamily.

It localises to the cytoplasm. The enzyme catalyses GTP + H2O = GDP + phosphate + H(+). Functionally, catalyzes the GTP-dependent ribosomal translocation step during translation elongation. During this step, the ribosome changes from the pre-translocational (PRE) to the post-translocational (POST) state as the newly formed A-site-bound peptidyl-tRNA and P-site-bound deacylated tRNA move to the P and E sites, respectively. Catalyzes the coordinated movement of the two tRNA molecules, the mRNA and conformational changes in the ribosome. The polypeptide is Elongation factor 2 (cot-3) (Neurospora crassa (strain ATCC 24698 / 74-OR23-1A / CBS 708.71 / DSM 1257 / FGSC 987)).